The primary structure comprises 478 residues: Serralysin C (478 aa).

Positions 1-17 (MEKNLSSRDDDALHSLS) are excised as a propeptide. Histidine 187 contacts Zn(2+). The active site involves glutamate 188. 2 residues coordinate Zn(2+): histidine 191 and tyrosine 227. Ca(2+) contacts are provided by arginine 264, glycine 266, aspartate 296, glycine 298, glycine 299, aspartate 301, threonine 338, glutamate 340, glycine 345, glycine 347, aspartate 349, asparagine 354, alanine 356, asparagine 358, glycine 362, glycine 363, alanine 364, glycine 365, aspartate 367, glycine 371, glycine 372, glycine 374, aspartate 376, glycine 380, glycine 381, glycine 383, aspartate 385, aspartate 394, aspartate 401, and aspartate 411. 2 Hemolysin-type calcium-binding repeats span residues 343–360 (IGGSGNDLLIGNNADNTL) and 361–378 (RGGAGDDVLFGGSGADRL).

The protein belongs to the peptidase M10B family. Ca(2+) serves as cofactor. Zn(2+) is required as a cofactor.

It localises to the secreted. The enzyme catalyses Preferential cleavage of bonds with hydrophobic residues in P1'.. This Dickeya chrysanthemi (Pectobacterium chrysanthemi) protein is Serralysin C (prtC).